Consider the following 329-residue polypeptide: MDVKETEEQRQMRRIAFVAVVVSTAAVIASVVTLPMLYNYVQSFQSHLMVETDYCKARSRDMWLEMTALQAGKGMGHRMKRAWLFGQWIPETSAGGGGSGNGGGNYGSGASTGGGANTAGYGGYGAAVNAEPAAVCCTCNQGAAGPPGPEGPPGNDGKDGRNGNDGKNGRDAEVLPAPASEPCIICPTGAPGPMGAMGPKGPPGPKGSPGEPPQDGKSGDDGMAGQPGPIGRPGRDGMKGAPGAAGRLIPVPGPQGAPGKPGPIGPPGPKGNPGPDGQSYQGPPGPPGDSGTPGHEGRAGPNGPAGPPGDNGEKGDCGHCPPPRTPPGY.

5 triple-helical region regions span residues 142 to 171 (GAAG…NGRD), 189 to 212 (GAPG…PGEP), 216 to 248 (GKSG…AGRL), 253 to 279 (GPQG…DGQS), and 282 to 320 (GPPG…CGHC). Positions 146–329 (PPGPEGPPGN…CPPPRTPPGY (184 aa)) are disordered. Basic and acidic residues predominate over residues 156-173 (DGKDGRNGNDGKNGRDAE). Over residues 187–199 (PTGAPGPMGAMGP) the composition is skewed to low complexity. The span at 200–212 (KGPPGPKGSPGEP) shows a compositional bias: pro residues. The span at 251 to 272 (VPGPQGAPGKPGPIGPPGPKGN) shows a compositional bias: pro residues. Low complexity predominate over residues 273–282 (PGPDGQSYQG). Residues 320 to 329 (CPPPRTPPGY) are compositionally biased toward pro residues.

This sequence belongs to the cuticular collagen family. Collagen polypeptide chains are complexed within the cuticle by disulfide bonds and other types of covalent cross-links.

Functionally, nematode cuticles are composed largely of collagen-like proteins. The cuticle functions both as an exoskeleton and as a barrier to protect the worm from its environment. The polypeptide is Cuticle collagen 6 (Caenorhabditis elegans).